The primary structure comprises 180 residues: NADH-quinone oxidoreductase subunit I 1 (180 aa).

4Fe-4S ferredoxin-type domains follow at residues 50 to 80 (LSRD…LQKT) and 90 to 119 (EFFR…LTPD). [4Fe-4S] cluster-binding residues include Cys-60, Cys-63, Cys-66, Cys-70, Cys-99, Cys-102, Cys-105, and Cys-109.

The protein belongs to the complex I 23 kDa subunit family. NDH-1 is composed of 14 different subunits. Subunits NuoA, H, J, K, L, M, N constitute the membrane sector of the complex. [4Fe-4S] cluster serves as cofactor.

Its subcellular location is the cell inner membrane. The catalysed reaction is a quinone + NADH + 5 H(+)(in) = a quinol + NAD(+) + 4 H(+)(out). Its function is as follows. NDH-1 shuttles electrons from NADH, via FMN and iron-sulfur (Fe-S) centers, to quinones in the respiratory chain. The immediate electron acceptor for the enzyme in this species is believed to be ubiquinone. Couples the redox reaction to proton translocation (for every two electrons transferred, four hydrogen ions are translocated across the cytoplasmic membrane), and thus conserves the redox energy in a proton gradient. The chain is NADH-quinone oxidoreductase subunit I 1 from Nitrosococcus oceani (strain ATCC 19707 / BCRC 17464 / JCM 30415 / NCIMB 11848 / C-107).